Reading from the N-terminus, the 156-residue chain is Peroxisomal membrane associated protein 20 (156 aa).

A Thioredoxin domain is found at 2 to 156; it reads VAVGSTLPKV…SSADKVLSSL (155 aa). The active-site Cysteine sulfenic acid (-SOH) intermediate is the cysteine 43.

It belongs to the peroxiredoxin family. Prx5 subfamily. In terms of assembly, homodimer; disulfide-linked, upon oxidation.

The protein localises to the cytoplasm. It is found in the nucleus. Its function is as follows. May act as a chaperone rather than a peroxidase. Has no thioredoxin-dependent peroxidase activity. Shows weak chaperone activity. This Schizosaccharomyces pombe (strain 972 / ATCC 24843) (Fission yeast) protein is Peroxisomal membrane associated protein 20.